The following is a 178-amino-acid chain: ATP synthase subunit delta (178 aa).

Belongs to the ATPase delta chain family. As to quaternary structure, F-type ATPases have 2 components, F(1) - the catalytic core - and F(0) - the membrane proton channel. F(1) has five subunits: alpha(3), beta(3), gamma(1), delta(1), epsilon(1). F(0) has three main subunits: a(1), b(2) and c(10-14). The alpha and beta chains form an alternating ring which encloses part of the gamma chain. F(1) is attached to F(0) by a central stalk formed by the gamma and epsilon chains, while a peripheral stalk is formed by the delta and b chains.

The protein resides in the cell membrane. Its function is as follows. F(1)F(0) ATP synthase produces ATP from ADP in the presence of a proton or sodium gradient. F-type ATPases consist of two structural domains, F(1) containing the extramembraneous catalytic core and F(0) containing the membrane proton channel, linked together by a central stalk and a peripheral stalk. During catalysis, ATP synthesis in the catalytic domain of F(1) is coupled via a rotary mechanism of the central stalk subunits to proton translocation. In terms of biological role, this protein is part of the stalk that links CF(0) to CF(1). It either transmits conformational changes from CF(0) to CF(1) or is implicated in proton conduction. This is ATP synthase subunit delta from Moorella thermoacetica (strain ATCC 39073 / JCM 9320).